A 144-amino-acid polypeptide reads, in one-letter code: Large ribosomal subunit protein uL15 (144 aa).

The interval 20 to 49 is disordered; sequence GRGIGSGLGKTGGRGHKGQKSRSGGFHKVG. The span at 21 to 31 shows a compositional bias: gly residues; the sequence is RGIGSGLGKTG.

It belongs to the universal ribosomal protein uL15 family. In terms of assembly, part of the 50S ribosomal subunit.

Binds to the 23S rRNA. In Neisseria meningitidis serogroup C (strain 053442), this protein is Large ribosomal subunit protein uL15.